A 61-amino-acid polypeptide reads, in one-letter code: Small ribosomal subunit protein uS14 (61 aa).

Zn(2+)-binding residues include cysteine 24, cysteine 27, cysteine 40, and cysteine 43.

Belongs to the universal ribosomal protein uS14 family. Zinc-binding uS14 subfamily. As to quaternary structure, part of the 30S ribosomal subunit. Contacts proteins S3 and S10. Zn(2+) is required as a cofactor.

Binds 16S rRNA, required for the assembly of 30S particles and may also be responsible for determining the conformation of the 16S rRNA at the A site. The chain is Small ribosomal subunit protein uS14 from Syntrophus aciditrophicus (strain SB).